Here is a 104-residue protein sequence, read N- to C-terminus: Large ribosomal subunit protein uL24 (104 aa).

This sequence belongs to the universal ribosomal protein uL24 family. As to quaternary structure, part of the 50S ribosomal subunit.

One of two assembly initiator proteins, it binds directly to the 5'-end of the 23S rRNA, where it nucleates assembly of the 50S subunit. Its function is as follows. One of the proteins that surrounds the polypeptide exit tunnel on the outside of the subunit. The protein is Large ribosomal subunit protein uL24 of Corynebacterium kroppenstedtii (strain DSM 44385 / JCM 11950 / CIP 105744 / CCUG 35717).